The following is a 151-amino-acid chain: Nucleoside diphosphate kinase (151 aa).

ATP contacts are provided by K11, F59, R87, T93, R104, and N114. Catalysis depends on H117, which acts as the Pros-phosphohistidine intermediate.

The protein belongs to the NDK family. In terms of assembly, homotetramer. Requires Mg(2+) as cofactor.

It is found in the cytoplasm. It catalyses the reaction a 2'-deoxyribonucleoside 5'-diphosphate + ATP = a 2'-deoxyribonucleoside 5'-triphosphate + ADP. It carries out the reaction a ribonucleoside 5'-diphosphate + ATP = a ribonucleoside 5'-triphosphate + ADP. In terms of biological role, major role in the synthesis of nucleoside triphosphates other than ATP. The ATP gamma phosphate is transferred to the NDP beta phosphate via a ping-pong mechanism, using a phosphorylated active-site intermediate. This chain is Nucleoside diphosphate kinase, found in Prochlorococcus marinus (strain SARG / CCMP1375 / SS120).